The chain runs to 228 residues: Cytidylate kinase (228 aa).

17 to 25 (GPSASGKGT) contacts ATP.

This sequence belongs to the cytidylate kinase family. Type 1 subfamily.

The protein localises to the cytoplasm. The enzyme catalyses CMP + ATP = CDP + ADP. It catalyses the reaction dCMP + ATP = dCDP + ADP. This chain is Cytidylate kinase, found in Paraburkholderia phytofirmans (strain DSM 17436 / LMG 22146 / PsJN) (Burkholderia phytofirmans).